The sequence spans 179 residues: Early E3 20.1 kDa glycoprotein (179 aa).

5 N-linked (GlcNAc...) asparagine; by host glycosylation sites follow: N29, N57, N70, N75, and N123.

It belongs to the adenoviridae E3_20 family.

Its function is as follows. E3 proteins seem to be dispensable for virus growth in tissue culture cells. They are potentially important for virus growth under special conditions; E3 region may help adenoviruses to evade the immune surveillance of the host. The polypeptide is Early E3 20.1 kDa glycoprotein (Homo sapiens (Human)).